A 500-amino-acid chain; its full sequence is L-arabinose isomerase (500 aa).

Mn(2+)-binding residues include glutamate 306, glutamate 333, histidine 350, and histidine 450.

The protein belongs to the arabinose isomerase family. Homohexamer. It depends on Mn(2+) as a cofactor.

The catalysed reaction is beta-L-arabinopyranose = L-ribulose. Its pathway is carbohydrate degradation; L-arabinose degradation via L-ribulose; D-xylulose 5-phosphate from L-arabinose (bacterial route): step 1/3. Functionally, catalyzes the conversion of L-arabinose to L-ribulose. The polypeptide is L-arabinose isomerase (Enterobacter sp. (strain 638)).